Reading from the N-terminus, the 357-residue chain is DNA replication and repair protein RecF (357 aa).

Position 30–37 (Gly30–Thr37) interacts with ATP.

It belongs to the RecF family.

The protein localises to the cytoplasm. Its function is as follows. The RecF protein is involved in DNA metabolism; it is required for DNA replication and normal SOS inducibility. RecF binds preferentially to single-stranded, linear DNA. It also seems to bind ATP. The polypeptide is DNA replication and repair protein RecF (Vibrio campbellii (strain ATCC BAA-1116)).